Reading from the N-terminus, the 986-residue chain is Translation initiation factor IF-2 (986 aa).

Basic and acidic residues predominate over residues 75–94 (KRLSRLEEQSRKTYEKEQHL). 4 disordered regions span residues 75-105 (KRLS…APPL), 127-148 (PPSK…PDAP), 185-258 (SEVP…VSFD), and 277-394 (GRHK…HEED). Composition is skewed to low complexity over residues 185 to 210 (SEVP…ESPL) and 218 to 235 (SEPQ…LPEI). Basic and acidic residues predominate over residues 292–313 (DALKDEFEPKPAEESRVEEKVV). Low complexity predominate over residues 315–338 (AKKPPVKAAADVKPKPVVADSSSS). Residues 339–348 (AKKKGKKKKK) show a composition bias toward basic residues. The tr-type G domain maps to 483–653 (TRPPVVTIMG…LTEAEMRELR (171 aa)). A G1 region spans residues 492-499 (GHVDHGKT). Position 492–499 (492–499 (GHVDHGKT)) interacts with GTP. A G2 region spans residues 517-521 (GITQH). The segment at 539–542 (DTPG) is G3. Residues 539–543 (DTPGH) and 593–596 (NKID) each bind GTP. Residues 593-596 (NKID) are G4. The interval 629-631 (SAK) is G5.

It belongs to the TRAFAC class translation factor GTPase superfamily. Classic translation factor GTPase family. IF-2 subfamily.

It localises to the cytoplasm. One of the essential components for the initiation of protein synthesis. Protects formylmethionyl-tRNA from spontaneous hydrolysis and promotes its binding to the 30S ribosomal subunits. Also involved in the hydrolysis of GTP during the formation of the 70S ribosomal complex. In Pelodictyon phaeoclathratiforme (strain DSM 5477 / BU-1), this protein is Translation initiation factor IF-2.